Here is a 562-residue protein sequence, read N- to C-terminus: Potassium-transporting ATPase potassium-binding subunit (562 aa).

The next 12 membrane-spanning stretches (helical) occupy residues 6 to 26 (FLLIASFMVVLFVLSRPLGGF), 62 to 82 (YALAILCFNLLGIVLLFVLLM), 132 to 152 (GLTVQNFLSAATGIAVAFALI), 175 to 195 (LYVLLPIALIIALIFVSQGVL), 253 to 273 (FVQMLAIFLIPCALCFAFGQV), 283 to 303 (LIWAMSLIFIVAVVVVMYAEL), 327 to 347 (FGILATSLYAVVTTAASCGAV), 356 to 376 (ALGGMIPLWLMQIGEVVFGGV), 379 to 399 (GLYGMLLFVLLTVFIAGLMIG), 416 to 436 (MTALAILVTPTIVLLGTALAL), 483 to 503 (LLLAAAMFIGRFGVILPVLAI), and 526 to 546 (LFIGLLIGTVLLVGALTFIPA).

The protein belongs to the KdpA family. In terms of assembly, the system is composed of three essential subunits: KdpA, KdpB and KdpC.

The protein resides in the cell inner membrane. Part of the high-affinity ATP-driven potassium transport (or Kdp) system, which catalyzes the hydrolysis of ATP coupled with the electrogenic transport of potassium into the cytoplasm. This subunit binds the periplasmic potassium ions and delivers the ions to the membrane domain of KdpB through an intramembrane tunnel. This Yersinia pseudotuberculosis serotype IB (strain PB1/+) protein is Potassium-transporting ATPase potassium-binding subunit.